The chain runs to 541 residues: Berberine bridge enzyme-like 1 (541 aa).

An N-terminal signal peptide occupies residues Met1–Ala20. N-linked (GlcNAc...) asparagine glycans are attached at residues Asn25, Asn38, Asn73, Asn136, Asn302, Asn339, and Asn357. A disulfide bridge links Cys35 with Cys98. Residues Thr76 to Val255 form the FAD-binding PCMH-type domain. Residues His113–Cys180 constitute a cross-link (6-(S-cysteinyl)-8alpha-(pros-histidyl)-FAD (His-Cys)).

This sequence belongs to the oxygen-dependent FAD-linked oxidoreductase family. Requires FAD as cofactor. The FAD cofactor is bound via a bicovalent 6-S-cysteinyl, 8alpha-N1-histidyl FAD linkage. Accumulates in cell walls of etiolated hypocotyls.

The protein resides in the secreted. Its subcellular location is the cell wall. The sequence is that of Berberine bridge enzyme-like 1 from Arabidopsis thaliana (Mouse-ear cress).